A 400-amino-acid chain; its full sequence is 3-hydroxybenzoate 6-hydroxylase (400 aa).

Belongs to the 3-hydroxybenzoate 6-hydroxylase family. Monomer. FAD serves as cofactor.

The enzyme catalyses 3-hydroxybenzoate + NADH + O2 + H(+) = 2,5-dihydroxybenzoate + NAD(+) + H2O. Catalyzes the NAD- or NADP-dependent conversion of 3-hydroxybenzoate to gentisate. The affinity of the enzyme toward NAD is twice as high as for NADP. This Polaromonas naphthalenivorans (strain CJ2) protein is 3-hydroxybenzoate 6-hydroxylase (nagX).